Consider the following 218-residue polypeptide: uncharacterized protein (218 aa).

The ACT domain occupies 4-83 (GISIEAENKV…IHSSLKKIYG (80 aa)).

This is an uncharacterized protein from Methanocaldococcus jannaschii (strain ATCC 43067 / DSM 2661 / JAL-1 / JCM 10045 / NBRC 100440) (Methanococcus jannaschii).